The following is a 467-amino-acid chain: Asparagine--tRNA ligase (467 aa).

Belongs to the class-II aminoacyl-tRNA synthetase family. Homodimer.

It is found in the cytoplasm. The catalysed reaction is tRNA(Asn) + L-asparagine + ATP = L-asparaginyl-tRNA(Asn) + AMP + diphosphate + H(+). This is Asparagine--tRNA ligase from Bacteroides fragilis (strain YCH46).